Reading from the N-terminus, the 259-residue chain is Thiazole synthase (259 aa).

Lysine 100 acts as the Schiff-base intermediate with DXP in catalysis. 1-deoxy-D-xylulose 5-phosphate contacts are provided by residues glycine 161, 187 to 188, and 209 to 210; these read AG and NT.

It belongs to the ThiG family. As to quaternary structure, homotetramer. Forms heterodimers with either ThiH or ThiS.

The protein resides in the cytoplasm. It catalyses the reaction [ThiS sulfur-carrier protein]-C-terminal-Gly-aminoethanethioate + 2-iminoacetate + 1-deoxy-D-xylulose 5-phosphate = [ThiS sulfur-carrier protein]-C-terminal Gly-Gly + 2-[(2R,5Z)-2-carboxy-4-methylthiazol-5(2H)-ylidene]ethyl phosphate + 2 H2O + H(+). The protein operates within cofactor biosynthesis; thiamine diphosphate biosynthesis. In terms of biological role, catalyzes the rearrangement of 1-deoxy-D-xylulose 5-phosphate (DXP) to produce the thiazole phosphate moiety of thiamine. Sulfur is provided by the thiocarboxylate moiety of the carrier protein ThiS. In vitro, sulfur can be provided by H(2)S. The chain is Thiazole synthase from Methylobacillus flagellatus (strain ATCC 51484 / DSM 6875 / VKM B-1610 / KT).